Reading from the N-terminus, the 194-residue chain is uncharacterized protein (194 aa).

The interval 25-156 is disordered; sequence PSWACRRGGP…ESPLGTLPCS (132 aa). Polar residues predominate over residues 43 to 57; the sequence is GPSTVPVTPTAGSCQ. The span at 104 to 113 shows a compositional bias: low complexity; that stretch reads SSSPGPSFHL.

This is an uncharacterized protein from Homo sapiens (Human).